Reading from the N-terminus, the 180-residue chain is NAD(P)H-quinone oxidoreductase subunit J (180 aa).

A compositionally biased stretch (polar residues) spans 1–16 (MNEETQTSELTNTDQG). The disordered stretch occupies residues 1–23 (MNEETQTSELTNTDQGPQIEPGP).

It belongs to the complex I 30 kDa subunit family. In terms of assembly, NDH-1 can be composed of about 15 different subunits; different subcomplexes with different compositions have been identified which probably have different functions.

The protein resides in the cellular thylakoid membrane. It catalyses the reaction a plastoquinone + NADH + (n+1) H(+)(in) = a plastoquinol + NAD(+) + n H(+)(out). It carries out the reaction a plastoquinone + NADPH + (n+1) H(+)(in) = a plastoquinol + NADP(+) + n H(+)(out). In terms of biological role, NDH-1 shuttles electrons from an unknown electron donor, via FMN and iron-sulfur (Fe-S) centers, to quinones in the respiratory and/or the photosynthetic chain. The immediate electron acceptor for the enzyme in this species is believed to be plastoquinone. Couples the redox reaction to proton translocation, and thus conserves the redox energy in a proton gradient. Cyanobacterial NDH-1 also plays a role in inorganic carbon-concentration. In Prochlorococcus marinus (strain MIT 9211), this protein is NAD(P)H-quinone oxidoreductase subunit J.